Here is a 405-residue protein sequence, read N- to C-terminus: Probable tRNA sulfurtransferase (405 aa).

The region spanning 60–165 is the THUMP domain; sequence DQVMARLSQV…REAIYLSTKT (106 aa). ATP contacts are provided by residues 183 to 184, 208 to 209, R265, G287, and Q296; these read ML and HF.

This sequence belongs to the ThiI family.

It localises to the cytoplasm. It carries out the reaction [ThiI sulfur-carrier protein]-S-sulfanyl-L-cysteine + a uridine in tRNA + 2 reduced [2Fe-2S]-[ferredoxin] + ATP + H(+) = [ThiI sulfur-carrier protein]-L-cysteine + a 4-thiouridine in tRNA + 2 oxidized [2Fe-2S]-[ferredoxin] + AMP + diphosphate. It catalyses the reaction [ThiS sulfur-carrier protein]-C-terminal Gly-Gly-AMP + S-sulfanyl-L-cysteinyl-[cysteine desulfurase] + AH2 = [ThiS sulfur-carrier protein]-C-terminal-Gly-aminoethanethioate + L-cysteinyl-[cysteine desulfurase] + A + AMP + 2 H(+). It functions in the pathway cofactor biosynthesis; thiamine diphosphate biosynthesis. Catalyzes the ATP-dependent transfer of a sulfur to tRNA to produce 4-thiouridine in position 8 of tRNAs, which functions as a near-UV photosensor. Also catalyzes the transfer of sulfur to the sulfur carrier protein ThiS, forming ThiS-thiocarboxylate. This is a step in the synthesis of thiazole, in the thiamine biosynthesis pathway. The sulfur is donated as persulfide by IscS. In Lacticaseibacillus paracasei (strain ATCC 334 / BCRC 17002 / CCUG 31169 / CIP 107868 / KCTC 3260 / NRRL B-441) (Lactobacillus paracasei), this protein is Probable tRNA sulfurtransferase.